The primary structure comprises 389 residues: MLEEPRPRPPPSGLAGLLFLALCSRALSNEILGLKLPGEPPLTANTVCLTLSGLSKRQLGLCLRNPDVTASALQGLHIAVHECQHQLRDQRWNCSALEGGGRLPHHSAILKRGFRESAFSFSMLAAGVMHAVATACSLGKLVSCGCGWKGSGEQDRLRAKLLQLQALSRGKSFPHSLPSPGPGSSPSPGPQDTWEWGGCNHDMDFGEKFSRDFLDSREAPRDIQARMRIHNNRVGRQVVTENLKRKCKCHGTSGSCQFKTCWRAAPEFRAVGAALRERLGRAIFIDTHNRNSGAFQPRLRPRRLSGELVYFEKSPDFCERDPTMGSPGTRGRACNKTSRLLDGCGSLCCGRGHNVLRQTRVERCHCRFHWCCYVLCDECKVTEWVNVCK.

An N-terminal signal peptide occupies residues 1–28 (MLEEPRPRPPPSGLAGLLFLALCSRALS). T46 is subject to Phosphothreonine. Disulfide bonds link C83–C94, C136–C144, C146–C199, C247–C261, C249–C256, C318–C349, C334–C344, C348–C388, C364–C379, C366–C376, and C371–C372. The N-linked (GlcNAc...) asparagine glycan is linked to N93. The segment at 171–197 (KSFPHSLPSPGPGSSPSPGPQDTWEWG) is disordered. Positions 177–189 (LPSPGPGSSPSPG) are enriched in pro residues. S253 carries the O-palmitoleoyl serine; by PORCN lipid modification. N335 carries an N-linked (GlcNAc...) asparagine glycan.

Belongs to the Wnt family. As to quaternary structure, forms a soluble 1:1 complex with AFM; this prevents oligomerization and is required for prolonged biological activity. The complex with AFM may represent the physiological form in body fluids. Post-translationally, palmitoleoylation is required for efficient binding to frizzled receptors. Depalmitoleoylation leads to Wnt signaling pathway inhibition. Detected in most adult tissues. Highest levels were found in heart and skeletal muscle. Low levels are found in brain.

It is found in the secreted. The protein resides in the extracellular space. The protein localises to the extracellular matrix. Its function is as follows. Member of the Wnt ligand gene family that encodes for secreted proteins, which activate the Wnt signaling cascade. Specifically activates canonical Wnt/beta-catenin signaling and thus triggers beta-catenin/LEF/TCF-mediated transcriptional programs. Involved in signaling networks controlling stemness, pluripotency and cell fate decisions. Acts in the immune system, mammary gland, adipose tissue, bone and skin. This is Protein Wnt-10b (WNT10B) from Homo sapiens (Human).